Reading from the N-terminus, the 199-residue chain is Copper transport protein CTR4 (199 aa).

The next 2 membrane-spanning stretches (helical) occupy residues 62–82 (KGMF…IELI) and 152–172 (AFFV…FIFL).

Belongs to the copper transporter (Ctr) (TC 1.A.56) family. SLC31A subfamily.

Its subcellular location is the membrane. In terms of biological role, required for high affinity copper (probably reduced Cu I) transport into the cell. Plays a role in fungal pathogenesis during host infection. The protein is Copper transport protein CTR4 of Cryptococcus neoformans var. grubii serotype A (strain H99 / ATCC 208821 / CBS 10515 / FGSC 9487) (Filobasidiella neoformans var. grubii).